We begin with the raw amino-acid sequence, 480 residues long: Adenosylhomocysteinase (480 aa).

The substrate site is built by threonine 63, aspartate 142, and glutamate 203. Residue 204–206 (TTT) coordinates NAD(+). 2 residues coordinate substrate: lysine 233 and aspartate 237. Residues asparagine 238, 267–272 (GYGDVG), glutamate 290, asparagine 325, 346–348 (IGH), and asparagine 394 contribute to the NAD(+) site.

The protein belongs to the adenosylhomocysteinase family. The cofactor is NAD(+).

The protein localises to the cytoplasm. It catalyses the reaction S-adenosyl-L-homocysteine + H2O = L-homocysteine + adenosine. It participates in amino-acid biosynthesis; L-homocysteine biosynthesis; L-homocysteine from S-adenosyl-L-homocysteine: step 1/1. In terms of biological role, may play a key role in the regulation of the intracellular concentration of adenosylhomocysteine. This is Adenosylhomocysteinase from Xanthomonas oryzae pv. oryzae (strain PXO99A).